Consider the following 316-residue polypeptide: ATP synthase gamma chain (316 aa).

The protein belongs to the ATPase gamma chain family. In terms of assembly, F-type ATPases have 2 components, CF(1) - the catalytic core - and CF(0) - the membrane proton channel. CF(1) has five subunits: alpha(3), beta(3), gamma(1), delta(1), epsilon(1). CF(0) has three main subunits: a, b and c.

The protein resides in the cellular thylakoid membrane. Produces ATP from ADP in the presence of a proton gradient across the membrane. The gamma chain is believed to be important in regulating ATPase activity and the flow of protons through the CF(0) complex. This chain is ATP synthase gamma chain, found in Synechococcus sp. (strain WH7803).